The sequence spans 1265 residues: Topoisomerase 1-associated factor 1 (1265 aa).

Polar residues predominate over residues 650–659 (DVNGNKNGQD). Disordered stretches follow at residues 650–670 (DVNG…DAIS), 1019–1052 (GKQI…DDDT), and 1167–1226 (HLSL…DPPS). The span at 1026–1039 (TAKKRSAIKPKSRK) shows a compositional bias: basic residues. 2 stretches are compositionally biased toward low complexity: residues 1171–1188 (SPNN…LSSD) and 1201–1211 (SDSEYNSSNSS).

It belongs to the timeless family. Component of the fork protection complex (FPC) consisting of TOF1 and CSM3.

The protein resides in the nucleus. Its function is as follows. Forms a fork protection complex (FPC) with CSM3 and which is required for chromosome segregation during meiosis and DNA damage repair. FPC coordinates leading and lagging strand synthesis and moves with the replication fork. FPC stabilizes replication forks in a configuration that is recognized by replication checkpoint sensors. The protein is Topoisomerase 1-associated factor 1 (TOF1) of Eremothecium gossypii (strain ATCC 10895 / CBS 109.51 / FGSC 9923 / NRRL Y-1056) (Yeast).